An 89-amino-acid polypeptide reads, in one-letter code: Small ribosomal subunit protein uS15 (89 aa).

Residues 1–10 (MAVTTDQKSQ) are compositionally biased toward polar residues. The interval 1–22 (MAVTTDQKSQVMRDYQRAAGDT) is disordered.

It belongs to the universal ribosomal protein uS15 family. In terms of assembly, part of the 30S ribosomal subunit. Forms a bridge to the 50S subunit in the 70S ribosome, contacting the 23S rRNA.

Functionally, one of the primary rRNA binding proteins, it binds directly to 16S rRNA where it helps nucleate assembly of the platform of the 30S subunit by binding and bridging several RNA helices of the 16S rRNA. Forms an intersubunit bridge (bridge B4) with the 23S rRNA of the 50S subunit in the ribosome. The protein is Small ribosomal subunit protein uS15 of Nitrosomonas europaea (strain ATCC 19718 / CIP 103999 / KCTC 2705 / NBRC 14298).